The primary structure comprises 454 residues: Bifunctional protein GlmU (454 aa).

Residues 1 to 226 are pyrophosphorylase; sequence MLAVAVLAAG…PDEVNGINNR (226 aa). UDP-N-acetyl-alpha-D-glucosamine-binding positions include 7-10, Lys21, Gln73, and 78-79; these read LAAG and GT. Asp103 contacts Mg(2+). Positions 140, 155, 170, and 224 each coordinate UDP-N-acetyl-alpha-D-glucosamine. Position 224 (Asn224) interacts with Mg(2+). A linker region spans residues 227-247; it reads RQLAQCEGVLQQRLRDHWMDE. An N-acetyltransferase region spans residues 248–454; the sequence is GVTFVDPASC…WDRNTQAAQS (207 aa). Arg329 and Lys347 together coordinate UDP-N-acetyl-alpha-D-glucosamine. The Proton acceptor role is filled by His359. UDP-N-acetyl-alpha-D-glucosamine-binding residues include Tyr362 and Asn373. Acetyl-CoA is bound by residues Ala376, Ala419, and Arg436.

This sequence in the N-terminal section; belongs to the N-acetylglucosamine-1-phosphate uridyltransferase family. It in the C-terminal section; belongs to the transferase hexapeptide repeat family. In terms of assembly, homotrimer. The cofactor is Mg(2+).

The protein resides in the cytoplasm. It carries out the reaction alpha-D-glucosamine 1-phosphate + acetyl-CoA = N-acetyl-alpha-D-glucosamine 1-phosphate + CoA + H(+). It catalyses the reaction N-acetyl-alpha-D-glucosamine 1-phosphate + UTP + H(+) = UDP-N-acetyl-alpha-D-glucosamine + diphosphate. It functions in the pathway nucleotide-sugar biosynthesis; UDP-N-acetyl-alpha-D-glucosamine biosynthesis; N-acetyl-alpha-D-glucosamine 1-phosphate from alpha-D-glucosamine 6-phosphate (route II): step 2/2. Its pathway is nucleotide-sugar biosynthesis; UDP-N-acetyl-alpha-D-glucosamine biosynthesis; UDP-N-acetyl-alpha-D-glucosamine from N-acetyl-alpha-D-glucosamine 1-phosphate: step 1/1. It participates in bacterial outer membrane biogenesis; LPS lipid A biosynthesis. In terms of biological role, catalyzes the last two sequential reactions in the de novo biosynthetic pathway for UDP-N-acetylglucosamine (UDP-GlcNAc). The C-terminal domain catalyzes the transfer of acetyl group from acetyl coenzyme A to glucosamine-1-phosphate (GlcN-1-P) to produce N-acetylglucosamine-1-phosphate (GlcNAc-1-P), which is converted into UDP-GlcNAc by the transfer of uridine 5-monophosphate (from uridine 5-triphosphate), a reaction catalyzed by the N-terminal domain. The protein is Bifunctional protein GlmU of Synechococcus sp. (strain CC9311).